A 432-amino-acid polypeptide reads, in one-letter code: Guanine nucleotide-binding protein subunit alpha (432 aa).

Positions Met1–Gln97 are disordered. Gly2 carries the N-myristoyl glycine lipid modification. The S-palmitoyl cysteine moiety is linked to residue Cys4. Positions Pro21–Ala52 are enriched in low complexity. A G-alpha domain is found at Lys111–Leu432. Residues Lys114–Thr127 form a G1 motif region. Glu122, Ser123, Gly124, Lys125, Ser126, Thr127, Asp230, Leu255, Thr261, Gly283, Asn349, Lys350, Asp352, and Ala404 together coordinate GTP. Position 126 (Ser126) interacts with Mg(2+). Residues Asp253 to Thr261 are G2 motif. Thr261 contributes to the Mg(2+) binding site. The G3 motif stretch occupies residues Ile276 to Arg285. Residues Ile345 to Asp352 form a G4 motif region. The segment at Thr402–Thr407 is G5 motif.

The protein belongs to the G-alpha family. G proteins are composed of 3 units; alpha, beta and gamma. The alpha chain contains the guanine nucleotide binding site. The cofactor is Mg(2+).

Its function is as follows. Guanine nucleotide-binding proteins (G proteins) are involved as modulators or transducers in various transmembrane signaling systems. Involved in the mating pathway. The chain is Guanine nucleotide-binding protein subunit alpha (GPA1) from Cryptococcus neoformans var. neoformans serotype D (strain B-3501A) (Filobasidiella neoformans).